The sequence spans 1200 residues: uncharacterized protein (1200 aa).

5 disordered regions span residues 282–302, 323–372, 392–491, 510–568, and 1056–1200; these read SQES…GCTS, LSEA…PQGS, SQEP…KASL, RAKS…RIGA, and SCPE…LASL. The segment covering 420-435 has biased composition (low complexity); that stretch reads ASSPRLSPASPAAAAS. Basic and acidic residues predominate over residues 437–448; the sequence is TKIEVKTKERNG. Over residues 518-527 the composition is skewed to polar residues; the sequence is GTTQTKTSGP. Positions 1137–1153 are enriched in basic and acidic residues; sequence EDGKGSHKLPDPAREHL. A compositionally biased stretch (low complexity) spans 1160 to 1171; the sequence is RQQPPRQSQVPR. Residues 1175–1200 are compositionally biased toward polar residues; that stretch reads GSFSSEGTDSQTSLEDSPQTSPLASL.

This is an uncharacterized protein from Homo sapiens (Human).